A 115-amino-acid chain; its full sequence is Nascent polypeptide-associated complex protein (115 aa).

An NAC-A/B domain is found at 6 to 72 (PMNPKQLKKL…SEEEKAIINI (67 aa)).

This sequence belongs to the NAC-alpha family. Homodimer. Interacts with the ribosome. Binds ribosomal RNA.

Functionally, contacts the emerging nascent chain on the ribosome. The chain is Nascent polypeptide-associated complex protein from Pyrococcus horikoshii (strain ATCC 700860 / DSM 12428 / JCM 9974 / NBRC 100139 / OT-3).